A 333-amino-acid chain; its full sequence is Protein VTE6, chloroplastic (333 aa).

The transit peptide at 1–65 (MATISSTLLL…SRADGATAAA (65 aa)) directs the protein to the chloroplast. A run of 6 helical transmembrane segments spans residues 94–114 (LLIF…SGIA), 126–146 (AYGS…TAAT), 171–191 (VIGS…QVGG), 248–268 (TLAG…LGQI), 274–294 (AVCV…GASF), and 307–327 (VVNV…QQFI).

It belongs to the TMEM19 family.

Its subcellular location is the plastid. It localises to the chloroplast membrane. It carries out the reaction phytyl phosphate + a ribonucleoside 5'-triphosphate = phytyl diphosphate + a ribonucleoside 5'-diphosphate. The catalysed reaction is phytyl phosphate + CTP = phytyl diphosphate + CDP. Its pathway is cofactor biosynthesis; tocopherol biosynthesis. Its function is as follows. Phytyl-phosphate kinase catalyzing the conversion of phytyl-monophosphate to phytyl-diphosphate. Involved in the activation and reutilization of phytol from chlorophyll degradation in plant metabolism, including tocopherol (vitamin E) biosynthesis. Involved in the biosynthesis of phylloquinone (vitamin K), which is required for the photosystem I (PSI) complex stability. The polypeptide is Protein VTE6, chloroplastic (Arabidopsis thaliana (Mouse-ear cress)).